Consider the following 207-residue polypeptide: Large ribosomal subunit protein uL4 (207 aa).

Belongs to the universal ribosomal protein uL4 family. In terms of assembly, part of the 50S ribosomal subunit.

Its function is as follows. One of the primary rRNA binding proteins, this protein initially binds near the 5'-end of the 23S rRNA. It is important during the early stages of 50S assembly. It makes multiple contacts with different domains of the 23S rRNA in the assembled 50S subunit and ribosome. In terms of biological role, forms part of the polypeptide exit tunnel. The protein is Large ribosomal subunit protein uL4 of Pelagibacter ubique (strain HTCC1062).